A 199-amino-acid chain; its full sequence is Small ribosomal subunit protein uS4 (199 aa).

One can recognise an S4 RNA-binding domain in the interval 91 to 154; it reads SRLDNVVYRL…KDLIIVKEAL (64 aa).

This sequence belongs to the universal ribosomal protein uS4 family. Part of the 30S ribosomal subunit. Contacts protein S5. The interaction surface between S4 and S5 is involved in control of translational fidelity.

Its function is as follows. One of the primary rRNA binding proteins, it binds directly to 16S rRNA where it nucleates assembly of the body of the 30S subunit. With S5 and S12 plays an important role in translational accuracy. The protein is Small ribosomal subunit protein uS4 of Phytoplasma mali (strain AT).